The chain runs to 400 residues: 8-amino-7-oxononanoate synthase (400 aa).

Residue arginine 21 participates in substrate binding. 112–113 (GY) lines the pyridoxal 5'-phosphate pocket. Histidine 137 is a substrate binding site. 3 residues coordinate pyridoxal 5'-phosphate: serine 183, histidine 211, and threonine 239. N6-(pyridoxal phosphate)lysine is present on lysine 242. Threonine 358 serves as a coordination point for substrate.

It belongs to the class-II pyridoxal-phosphate-dependent aminotransferase family. BioF subfamily. As to quaternary structure, homodimer. Pyridoxal 5'-phosphate is required as a cofactor.

It catalyses the reaction 6-carboxyhexanoyl-[ACP] + L-alanine + H(+) = (8S)-8-amino-7-oxononanoate + holo-[ACP] + CO2. Its pathway is cofactor biosynthesis; biotin biosynthesis. Its function is as follows. Catalyzes the decarboxylative condensation of pimeloyl-[acyl-carrier protein] and L-alanine to produce 8-amino-7-oxononanoate (AON), [acyl-carrier protein], and carbon dioxide. In Burkholderia lata (strain ATCC 17760 / DSM 23089 / LMG 22485 / NCIMB 9086 / R18194 / 383), this protein is 8-amino-7-oxononanoate synthase.